The sequence spans 303 residues: Pseudouridine-5'-phosphate glycosidase (303 aa).

Catalysis depends on Glu-26, which acts as the Proton donor. Substrate-binding residues include Lys-87 and Val-107. Asp-139 is a binding site for Mn(2+). 141-143 provides a ligand contact to substrate; that stretch reads SAD. Lys-160 acts as the Nucleophile in catalysis.

This sequence belongs to the pseudouridine-5'-phosphate glycosidase family. As to quaternary structure, homotrimer. It depends on Mn(2+) as a cofactor.

It carries out the reaction D-ribose 5-phosphate + uracil = psi-UMP + H2O. Its function is as follows. Catalyzes the reversible cleavage of pseudouridine 5'-phosphate (PsiMP) to ribose 5-phosphate and uracil. Functions biologically in the cleavage direction, as part of a pseudouridine degradation pathway. The chain is Pseudouridine-5'-phosphate glycosidase from Saccharopolyspora erythraea (strain ATCC 11635 / DSM 40517 / JCM 4748 / NBRC 13426 / NCIMB 8594 / NRRL 2338).